A 618-amino-acid chain; its full sequence is Chaperone protein DnaK (618 aa).

The residue at position 175 (Thr-175) is a Phosphothreonine; by autocatalysis. A disordered region spans residues 576-618 (SQNAEPGADGGANSGANPGGTTGNTDTKDDNVVDAEYKVDDDK). The segment covering 583–597 (ADGGANSGANPGGTT) has biased composition (gly residues). A compositionally biased stretch (basic and acidic residues) spans 601 to 618 (DTKDDNVVDAEYKVDDDK).

The protein belongs to the heat shock protein 70 family.

Acts as a chaperone. This is Chaperone protein DnaK from Clostridium kluyveri (strain NBRC 12016).